Here is a 120-residue protein sequence, read N- to C-terminus: Ribosome-binding factor A (120 aa).

This sequence belongs to the RbfA family. Monomer. Binds 30S ribosomal subunits, but not 50S ribosomal subunits or 70S ribosomes.

It is found in the cytoplasm. Functionally, one of several proteins that assist in the late maturation steps of the functional core of the 30S ribosomal subunit. Associates with free 30S ribosomal subunits (but not with 30S subunits that are part of 70S ribosomes or polysomes). Required for efficient processing of 16S rRNA. May interact with the 5'-terminal helix region of 16S rRNA. The sequence is that of Ribosome-binding factor A from Campylobacter jejuni subsp. jejuni serotype O:6 (strain 81116 / NCTC 11828).